Reading from the N-terminus, the 232-residue chain is Large ribosomal subunit protein uL1 (232 aa).

It belongs to the universal ribosomal protein uL1 family. Part of the 50S ribosomal subunit.

Functionally, binds directly to 23S rRNA. The L1 stalk is quite mobile in the ribosome, and is involved in E site tRNA release. Its function is as follows. Protein L1 is also a translational repressor protein, it controls the translation of the L11 operon by binding to its mRNA. This chain is Large ribosomal subunit protein uL1, found in Chlamydia trachomatis serovar D (strain ATCC VR-885 / DSM 19411 / UW-3/Cx).